Consider the following 321-residue polypeptide: Gap junction delta-2 protein (321 aa).

The Cytoplasmic segment spans residues 1–19; that stretch reads MGEWTILERLLEAAVQQHS. Residues 20-42 traverse the membrane as a helical segment; that stretch reads TMIGRILLTVVVIFRILIVAIVG. Over 43-75 the chain is Extracellular; it reads ETVYDDEQTMFVCNTLQPGCNQACYDRAFPISH. Residues 76–98 form a helical membrane-spanning segment; it reads IRYWVFQIIMVCTPSLCFITYSV. The Cytoplasmic segment spans residues 99–197; it reads HQSAKQRERR…KLRRQEGISR (99 aa). The interval 118–141 is disordered; the sequence is RDPPESIGGPGGTGGGGSGGGKRE. Over residues 125–137 the composition is skewed to gly residues; that stretch reads GGPGGTGGGGSGG. A helical transmembrane segment spans residues 198–220; that stretch reads FYIIQVVFRNALEIGFLVGQYFL. The Extracellular portion of the chain corresponds to 221–252; the sequence is YGFSVPGLYECNRYPCIKEVECYVSRPTEKTV. Residues 253 to 275 traverse the membrane as a helical segment; the sequence is FLVFMFAVSGICVVLNLAELNHL. At 276–321 the chain is on the cytoplasmic side; that stretch reads GWRKIKLAVRGAQAKRKSIYEIRNKDLPRVSVPNFGRTQSSDSAYV.

Belongs to the connexin family. Delta-type subfamily. A connexon is composed of a hexamer of connexins. As to expression, highly expressed in neurons.

The protein localises to the cell membrane. It localises to the cell junction. The protein resides in the gap junction. Its function is as follows. One gap junction consists of a cluster of closely packed pairs of transmembrane channels, the connexons, through which materials of low MW diffuse from one cell to a neighboring cell. The sequence is that of Gap junction delta-2 protein (GJD2) from Homo sapiens (Human).